Here is a 531-residue protein sequence, read N- to C-terminus: Putative UDP-glucuronosyltransferase ugt-46 (531 aa).

The signal sequence occupies residues 1-17 (MRLIFVLLATFVNAAFS). Asn304 is a glycosylation site (N-linked (GlcNAc...) asparagine). Residues 493 to 513 (VIIPVFWLSISLVIPTIFGWY) form a helical membrane-spanning segment.

It belongs to the UDP-glycosyltransferase family.

The protein resides in the membrane. It carries out the reaction glucuronate acceptor + UDP-alpha-D-glucuronate = acceptor beta-D-glucuronoside + UDP + H(+). The protein is Putative UDP-glucuronosyltransferase ugt-46 (ugt-46) of Caenorhabditis elegans.